Consider the following 255-residue polypeptide: Wtf element wtf15 (255 aa).

The disordered stretch occupies residues 19–78 (KAGHEIDLEGSPPSEHNSEEKSTLPSNSDILTSANPVSQASETPDHSIESNTGSTQSPTS). 2 stretches are compositionally biased toward polar residues: residues 41 to 60 (TLPS…QASE) and 67 to 78 (ESNTGSTQSPTS). Transmembrane regions (helical) follow at residues 85–105 (FSFC…CVLP), 112–132 (FLIA…SGSI), 162–182 (FLKT…LVLL), and 187–208 (WGWK…SFCL).

This sequence belongs to the WTF family.

The protein resides in the spore membrane. Its function is as follows. May act in meiotic drive. This Schizosaccharomyces pombe (strain 972 / ATCC 24843) (Fission yeast) protein is Wtf element wtf15.